The primary structure comprises 855 residues: Axonemal dynein light chain domain-containing protein 1 (855 aa).

Residues 1–17 show a composition bias toward polar residues; the sequence is MSLPKTPSTPLNSASTS. Positions 1–31 are disordered; that stretch reads MSLPKTPSTPLNSASTSESKKLVSVATEGTR. 3 coiled-coil regions span residues 316–402, 451–480, and 571–596; these read QRIL…WSSA, LQKLTQKWRNLVNKFKQEVEEMEESTRETL, and SERQYMEEIIKNIQKLYKEYEIRING.

The protein resides in the cytoplasm. Functionally, may be essential for spermiogenesis and male fertility probably by regulating the manchette dynamics, spermatid head shaping and sperm flagellum assembly. In Macaca fascicularis (Crab-eating macaque), this protein is Axonemal dynein light chain domain-containing protein 1 (AXDND1).